The sequence spans 197 residues: Imidazoleglycerol-phosphate dehydratase (197 aa).

This sequence belongs to the imidazoleglycerol-phosphate dehydratase family.

It localises to the cytoplasm. It catalyses the reaction D-erythro-1-(imidazol-4-yl)glycerol 3-phosphate = 3-(imidazol-4-yl)-2-oxopropyl phosphate + H2O. It functions in the pathway amino-acid biosynthesis; L-histidine biosynthesis; L-histidine from 5-phospho-alpha-D-ribose 1-diphosphate: step 6/9. This Syntrophus aciditrophicus (strain SB) protein is Imidazoleglycerol-phosphate dehydratase.